A 174-amino-acid chain; its full sequence is Superoxide dismutase [Cu-Zn] (174 aa).

A signal peptide spans 1–23; sequence MIRLSAAAALGLAAALAASPALA. Positions 68, 70, and 86 each coordinate Cu cation. Cysteine 75 and cysteine 170 are oxidised to a cystine. Residues histidine 86, histidine 95, aspartate 104, and aspartate 107 each contribute to the Zn(2+) site. Position 150 (histidine 150) interacts with Cu cation.

The protein belongs to the Cu-Zn superoxide dismutase family. Homodimer. It depends on Cu cation as a cofactor. Zn(2+) serves as cofactor.

It is found in the periplasm. The enzyme catalyses 2 superoxide + 2 H(+) = H2O2 + O2. Functionally, destroys radicals which are normally produced within the cells and which are toxic to biological systems. May function against extracytoplasmic toxic oxygen species. This Caulobacter vibrioides (strain ATCC 19089 / CIP 103742 / CB 15) (Caulobacter crescentus) protein is Superoxide dismutase [Cu-Zn] (sodC).